The following is a 160-amino-acid chain: MMPAKLQLDVLRTLQSSARHGTQTLKNSNFLERFHKDRIVFCLPFFPALFLVPVQKVLQHLCLRFTQVAPYFIIQLFDLPSRHAENLAPLLASCRIQYTNCFSSSSNGQVPSIISLYLRVDLSPFYAKIFQISYRVPMIWLDVFQVFFVFLVISQHSLHS.

2 helical membrane passes run 39 to 59 (IVFC…KVLQ) and 136 to 156 (VPMI…ISQH).

The protein belongs to the UPF0479 family.

The protein resides in the membrane. The polypeptide is Putative UPF0479 protein YLR466C-A (Saccharomyces cerevisiae (strain ATCC 204508 / S288c) (Baker's yeast)).